The primary structure comprises 157 residues: Protein Smg (157 aa).

Belongs to the Smg family.

The sequence is that of Protein Smg from Klebsiella pneumoniae (strain 342).